The sequence spans 336 residues: ATP-dependent 6-phosphofructokinase (336 aa).

Gly11 contacts ATP. 21–25 (RAVVR) provides a ligand contact to ADP. ATP-binding positions include 72–73 (RY) and 102–105 (GDGS). Asp103 contacts Mg(2+). 125 to 127 (TID) contributes to the substrate binding site. Asp127 acts as the Proton acceptor in catalysis. Arg154 provides a ligand contact to ADP. Substrate is bound by residues Arg162 and 169-171 (MGR). ADP is bound by residues 185–187 (GAD), Lys211, and 213–215 (KKH). Substrate is bound by residues Glu222, Arg244, and 250-253 (HIQR).

Belongs to the phosphofructokinase type A (PFKA) family. ATP-dependent PFK group I subfamily. Prokaryotic clade 'B1' sub-subfamily. Homotetramer. Mg(2+) serves as cofactor.

The protein resides in the cytoplasm. It carries out the reaction beta-D-fructose 6-phosphate + ATP = beta-D-fructose 1,6-bisphosphate + ADP + H(+). It participates in carbohydrate degradation; glycolysis; D-glyceraldehyde 3-phosphate and glycerone phosphate from D-glucose: step 3/4. Allosterically activated by ADP and other diphosphonucleosides, and allosterically inhibited by phosphoenolpyruvate. Functionally, catalyzes the phosphorylation of D-fructose 6-phosphate to fructose 1,6-bisphosphate by ATP, the first committing step of glycolysis. In Streptococcus suis (strain 05ZYH33), this protein is ATP-dependent 6-phosphofructokinase.